A 411-amino-acid chain; its full sequence is Citrate synthase (411 aa).

Residues His304 and Asp363 contribute to the active site.

Belongs to the citrate synthase family.

The enzyme catalyses oxaloacetate + acetyl-CoA + H2O = citrate + CoA + H(+). The protein operates within carbohydrate metabolism; tricarboxylic acid cycle; isocitrate from oxaloacetate: step 1/2. This Rickettsia conorii subsp. caspia (strain A-167) (Astrakhan rickettsia) protein is Citrate synthase (gltA).